A 132-amino-acid chain; its full sequence is Mercuric resistance operon regulatory protein (132 aa).

The HTH merR-type domain maps to 2–71; that stretch reads KFRIGELADK…LNEIDKLLGV (70 aa). Residues 5 to 24 constitute a DNA-binding region (H-T-H motif); it reads IGELADKCGVNKETIRYYER. Residues Cys-79, Cys-114, and Cys-123 each contribute to the Hg(2+) site.

As to quaternary structure, homodimer.

Its function is as follows. Mediates the mercuric-dependent induction of mercury resistance operon. In the absence of mercury MerR represses transcription by binding tightly to the mer operator region; when mercury is present the dimeric complex binds a single ion and becomes a potent transcriptional activator, while remaining bound to the mer site. The chain is Mercuric resistance operon regulatory protein (merR1) from Bacillus cereus.